The following is a 512-amino-acid chain: MNFLLLTFIVLPLCSHAKFSIVFPQSQKGNWKNVPSSYHYCPSSSDQNWHNDLLGITMKVKMPKTHKAIQADGWMCHAAKWITTCDFRWYGPKYITHSIHSIQPTSEQCKESIKQTKQGTWMSPGFPPQNCGYATVTDSVAVVVQATPHHVLVDEYTGEWIDSQFPNGKCETEECETVHNSTVWYSDYKVTGLCDATLVDTEITFFSEDGKKESIGKPNTGYRSNYFAYEKGDKVCKMNYCKHAGVRLPSGVWFEFVDQDVYAAAKLPECPVGATISAPTQTSVDVSLILDVERILDYSLCQETWSKIRSKQPVSPVDLSYLAPKNPGTGPAFTIINGTLKYFETRYIRIDIDNPIISKMVGKISGSQTERELWTEWFPYEGVEIGPNGILKTPTGYKFPLFMIGHGMLDSDLHKTSQAEVFEHPHLAEAPKQLPEEETLFFGDTGISKNPVELIEGWFSSWKSTVVTFFFAIGVFILLYVVARIVIAVRYRYQGSNNKRIYNDIEMSRFRK.

Residues 1-17 (MNFLLLTFIVLPLCSHA) form the signal peptide. The Virion surface portion of the chain corresponds to 18 to 468 (KFSIVFPQSQ…FSSWKSTVVT (451 aa)). 6 disulfide bridges follow: Cys-41/Cys-301, Cys-76/Cys-109, Cys-85/Cys-131, Cys-170/Cys-175, Cys-194/Cys-241, and Cys-236/Cys-270. The tract at residues 54 to 173 (LGITMKVKMP…QFPNGKCETE (120 aa)) is fusion peptide. N-linked (GlcNAc...) asparagine; by host glycosylation is present at Asn-180. The interval 260 to 310 (DVYAAAKLPECPVGATISAPTQTSVDVSLILDVERILDYSLCQETWSKIRS) is trimerization. An N-linked (GlcNAc...) asparagine; by host glycan is attached at Asn-337. A trimerization region spans residues 384–406 (EIGPNGILKTPTGYKFPLFMIGH). A helical membrane pass occupies residues 469-489 (FFFAIGVFILLYVVARIVIAV). Residues 490–512 (RYRYQGSNNKRIYNDIEMSRFRK) are Intravirion-facing.

It belongs to the vesiculovirus glycoprotein family. In terms of assembly, homotrimer. Interacts with host LDL at target cell surface. In terms of processing, glycosylated by host. Palmitoylated by host.

The protein localises to the virion membrane. Its subcellular location is the host membrane. Its function is as follows. Attaches the virus to host receptors, inducing clathrin-dependent endocytosis of the virion. In the endosome, the acidic pH induces conformational changes in the glycoprotein trimer, which trigger fusion between virus and endosomal membrane. This chain is Glycoprotein (G), found in Cocal virus (COCV).